The chain runs to 119 residues: Large ribosomal subunit protein bL20 (119 aa).

It belongs to the bacterial ribosomal protein bL20 family.

Binds directly to 23S ribosomal RNA and is necessary for the in vitro assembly process of the 50S ribosomal subunit. It is not involved in the protein synthesizing functions of that subunit. The protein is Large ribosomal subunit protein bL20 of Bordetella petrii (strain ATCC BAA-461 / DSM 12804 / CCUG 43448).